The primary structure comprises 1779 residues: 6-methylsalicylic acid synthase (1779 aa).

Residues 1 to 11 (MSASRSSTKFS) show a composition bias toward polar residues. A disordered region spans residues 1–40 (MSASRSSTKFSTPAEGSDNGKEFTTPATSTEGHEVPDRPG). Residues 31-40 (EGHEVPDRPG) show a composition bias toward basic and acidic residues. In terms of domain architecture, Ketosynthase family 3 (KS3) spans 43-472 (LADVAIIGMA…GTVSHAVLEA (430 aa)). Residues cysteine 215, histidine 350, and histidine 392 each act as for beta-ketoacyl synthase activity in the active site. The segment at 586 to 883 (WIFSGHGAQW…TPTMVRRQPA (298 aa)) is malonyl-CoA:ACP transacylase (MAT) domain. The For acyl/malonyl transferase activity role is filled by serine 672. Positions 942–1218 (THDPAANNLL…SFAGLEGESF (277 aa)) are product template (PT) domain. Residues 948–1064 (NNLLGKRIAL…AAVGAANVVP (117 aa)) are N-terminal hotdog fold. Residues 948–1219 (NNLLGKRIAL…FAGLEGESFS (272 aa)) enclose the PKS/mFAS DH domain. Histidine 980 acts as the Proton acceptor; for dehydratase activity in catalysis. The C-terminal hotdog fold stretch occupies residues 1079–1219 (PQKLADSFSI…FAGLEGESFS (141 aa)). Aspartate 1138 functions as the Proton donor; for dehydratase activity in the catalytic mechanism. The Carrier domain occupies 1703–1777 (QHLRDVINGC…HLVKHFTKEL (75 aa)). An O-(pantetheine 4'-phosphoryl)serine modification is found at serine 1737.

It catalyses the reaction 3 malonyl-CoA + acetyl-CoA + NADPH + 3 H(+) = 6-methylsalicylate + 3 CO2 + NADP(+) + 4 CoA + H2O. It participates in secondary metabolite biosynthesis; terpenoid biosynthesis. Functionally, non-reducing polyketide synthase; part of the gene cluster that mediates the biosynthesis of yanuthone D, a fungal isoprenoid epoxycyclohexenone that acts as an antibiotic against fungi and bacteria. The first step of the pathway is the synthesis of 6-methylsalicylic acid (6-MSA) by the polyketide synthase yanA. 6-MSA is then converted to m-cresol by the decarboxylase yanB. The cytochrome P450 monooxygenase yanC then catalyzes the oxidation of m-cresol to toluquinol. Epoxidation of toluquinol is then performed by the short chain dehydrogenase yanD, with the help of yanE, and a further prenylation by yanG leads to 7-deacetoxyyanuthone A. The next step is the hydroxylation of C-22 of 7-deacetoxyyanuthone A by the cytochrome P450 monooxygenase yanH to yield 22-deacetylyanuthone A. O-Mevalon transferase yanI then attaches mevalon to the hydroxyl group of 22-deacetylyanuthone A to produce yanuthone E. Finally, the FAD-dependent monooxygenase yanF oxidizes the hydroxyl group at C15 of yanuthone E to form yanuthone D. Furthermore, several branching points in the pathway lead to the production of yanuthones F and G from 7-deacetoxyyanuthone A; yanuthones H and I from 22-deacetylyanuthone A; and yanuthone J from yanuthone E. This Aspergillus niger (strain ATCC 1015 / CBS 113.46 / FGSC A1144 / LSHB Ac4 / NCTC 3858a / NRRL 328 / USDA 3528.7) protein is 6-methylsalicylic acid synthase.